The following is a 122-amino-acid chain: Proteasome assembly chaperone 3 (122 aa).

N-acetylmethionine is present on Met-1.

It belongs to the PSMG3 family. As to quaternary structure, homodimer. Interacts directly with alpha and beta subunits of the 20S proteasome but dissociates before the formation of half-proteasomes, probably upon recruitment of POMP. Interacts with PSMG4.

In terms of biological role, chaperone protein which promotes assembly of the 20S proteasome. May cooperate with PSMG1-PSMG2 heterodimers to orchestrate the correct assembly of proteasomes. In Mus musculus (Mouse), this protein is Proteasome assembly chaperone 3 (Psmg3).